Consider the following 373-residue polypeptide: Protodeoxyviolaceinate monooxygenase (373 aa).

2–20 (KILVIGAGPAGLVFASQLK) lines the FAD pocket.

The cofactor is FAD.

It catalyses the reaction protodeoxyviolaceinate + NADH + O2 + H(+) = protoviolaceinate + NAD(+) + H2O. The enzyme catalyses protodeoxyviolaceinate + NADPH + O2 + H(+) = protoviolaceinate + NADP(+) + H2O. It functions in the pathway pigment biosynthesis; violacein biosynthesis. In terms of biological role, catalyzes the oxygenation of the 6-position of protodeoxyviolaceinate to form proviolacein. This Chromobacterium violaceum (strain ATCC 12472 / DSM 30191 / JCM 1249 / CCUG 213 / NBRC 12614 / NCIMB 9131 / NCTC 9757 / MK) protein is Protodeoxyviolaceinate monooxygenase (vioD).